The chain runs to 171 residues: Bursicon (171 aa).

A signal peptide spans 1-31 (MISSPSTPATFAAGSLVLLCLVLGGGHFALA). 5 cysteine pairs are disulfide-bonded: Cys47/Cys96, Cys61/Cys110, Cys71/Cys131, Cys75/Cys133, and Cys93/Cys136. In terms of domain architecture, CTCK spans 47–137 (CQVTPVIHVL…PLECMCRPCT (91 aa)).

As to quaternary structure, heterodimer of burs and pburs.

It is found in the secreted. Final heterodimeric neurohormone released at the end of the molting cycle, involved in the sclerotization (tanning) of the insect cuticle, melanization and wing spreading. This Culex pipiens pipiens (Northern house mosquito) protein is Bursicon.